A 513-amino-acid polypeptide reads, in one-letter code: ATP synthase subunit alpha (513 aa).

169 to 176 (GDRQIGKT) contributes to the ATP binding site.

Belongs to the ATPase alpha/beta chains family. F-type ATPases have 2 components, CF(1) - the catalytic core - and CF(0) - the membrane proton channel. CF(1) has five subunits: alpha(3), beta(3), gamma(1), delta(1), epsilon(1). CF(0) has three main subunits: a(1), b(2) and c(9-12). The alpha and beta chains form an alternating ring which encloses part of the gamma chain. CF(1) is attached to CF(0) by a central stalk formed by the gamma and epsilon chains, while a peripheral stalk is formed by the delta and b chains.

Its subcellular location is the cell inner membrane. It carries out the reaction ATP + H2O + 4 H(+)(in) = ADP + phosphate + 5 H(+)(out). Produces ATP from ADP in the presence of a proton gradient across the membrane. The alpha chain is a regulatory subunit. The sequence is that of ATP synthase subunit alpha from Vibrio alginolyticus.